The following is a 211-amino-acid chain: Outer-membrane lipoprotein carrier protein (211 aa).

Positions Met-1–Ala-25 are cleaved as a signal peptide.

Belongs to the LolA family. As to quaternary structure, monomer.

It is found in the periplasm. In terms of biological role, participates in the translocation of lipoproteins from the inner membrane to the outer membrane. Only forms a complex with a lipoprotein if the residue after the N-terminal Cys is not an aspartate (The Asp acts as a targeting signal to indicate that the lipoprotein should stay in the inner membrane). The sequence is that of Outer-membrane lipoprotein carrier protein from Pseudomonas putida (strain W619).